The following is a 921-amino-acid chain: Protein translocase subunit SecA (921 aa).

Residues Gln87, 105-109 (GEGKT), and Asp515 each bind ATP. Residues 872 to 901 (DMEVAGSTGDRGAALDIQPAPVRSGPKIGR) form a disordered region. Zn(2+) is bound by residues Cys905, Cys907, Cys916, and Cys917.

Belongs to the SecA family. In terms of assembly, monomer and homodimer. Part of the essential Sec protein translocation apparatus which comprises SecA, SecYEG and auxiliary proteins SecDF-YajC and YidC. The cofactor is Zn(2+).

Its subcellular location is the cell inner membrane. It localises to the cytoplasm. The enzyme catalyses ATP + H2O + cellular proteinSide 1 = ADP + phosphate + cellular proteinSide 2.. Its function is as follows. Part of the Sec protein translocase complex. Interacts with the SecYEG preprotein conducting channel. Has a central role in coupling the hydrolysis of ATP to the transfer of proteins into and across the cell membrane, serving both as a receptor for the preprotein-SecB complex and as an ATP-driven molecular motor driving the stepwise translocation of polypeptide chains across the membrane. This is Protein translocase subunit SecA from Polynucleobacter asymbioticus (strain DSM 18221 / CIP 109841 / QLW-P1DMWA-1) (Polynucleobacter necessarius subsp. asymbioticus).